The following is a 59-amino-acid chain: Eag protein (59 aa).

This chain is Eag protein (eag), found in Salmonella phage P22 (Bacteriophage P22).